Here is a 399-residue protein sequence, read N- to C-terminus: Dof zinc finger protein DOF5.1 (399 aa).

The segment at 95 to 149 (LKCPRCDSTNTKFCYFNNYSLTQPRHFCKACRRYWTRGGALRSVPVGGGCRRNKR) adopts a Dof-type zinc-finger fold. Residues cysteine 97, cysteine 100, cysteine 122, and cysteine 125 each coordinate Zn(2+). A disordered region spans residues 139–176 (PVGGGCRRNKRTKNSSGGGGGSTSSGNSKSQDSATSND).

In terms of tissue distribution, expressed ubiquitously, especially in the vascular tissues, except in seeds, petals and anthers. Specific to the vascular tissues in young leaves, cotyledons and flower buds. The PEAR proteins (e.g. DOF2.4, DOF5.1, DOF3.2, DOF1.1, DOF5.6 and DOF5.3) form a short-range concentration gradient that peaks at protophloem sieve elements (PSE).

Its subcellular location is the nucleus. Functionally, transcription factor that binds specifically to a 5'-AA[AG]G-3' consensus core sequence. Binds to 5'-TAAAGT-3' motif in REV promoter to triggers its transcription, thus regulating adaxial-abaxial polarity and influencing leaf axial patterning in an auxin transport- and response-dependent manner (e.g. IAA6 and IAA19 genes expression). Probably involved in early processes for vascular development. The PEAR proteins (e.g. DOF2.4, DOF5.1, DOF3.2, DOF1.1, DOF5.6 and DOF5.3) activate gene expression that promotes radial growth of protophloem sieve elements. The polypeptide is Dof zinc finger protein DOF5.1 (Arabidopsis thaliana (Mouse-ear cress)).